The sequence spans 555 residues: Solute carrier family 2, facilitated glucose transporter member 10 (555 aa).

Residues 1–15 (MGLSSPTLILAATVS) lie on the Cytoplasmic side of the membrane. The chain crosses the membrane as a helical span at residues 16-36 (LLGGIVFGYELGIISGALLVL). The Extracellular portion of the chain corresponds to 37–48 (KTVYQLTCFEQE). A helical transmembrane segment spans residues 49-69 (ALVSAVLFGALLASLIGGIII). At 70-82 (DRWGRRTAILASN) the chain is on the cytoplasmic side. The chain crosses the membrane as a helical span at residues 83-103 (LVVLAGSIILIATSTFWWLIV). The Extracellular segment spans residues 104 to 105 (GR). The chain crosses the membrane as a helical span at residues 106 to 126 (VTIGFAISISSMACCIYVSEI). Residues 127–132 (VRPHQR) lie on the Cytoplasmic side of the membrane. Residues 133–153 (GMLVSLYETGITVGILISYAM) form a helical membrane-spanning segment. The Extracellular portion of the chain corresponds to 154–165 (NYFLSGVNESWK). N-linked (GlcNAc...) asparagine glycosylation is present at Asn161. The helical transmembrane segment at 166 to 186 (YMFGLAIVPAAFQFISILFLP) threads the bilayer. The Cytoplasmic segment spans residues 187-240 (SKPHKLNFWEQDTDDGFIELEETGEAGEFKPDTYDRQYTFLDLFRSKDNMRTRT). Residues 241–261 (LLGLGLVLFQQFTGQPNVLYY) form a helical membrane-spanning segment. Residue 250–251 (QQ) participates in D-glucose binding. The Extracellular portion of the chain corresponds to 262–277 (ASTIFQSVGFQSNSSA). Asn274 carries N-linked (GlcNAc...) asparagine glycosylation. Residues 278–298 (VLASVGLGVVKVASTLIAICF) traverse the membrane as a helical segment. Residues 299-305 (ADKAGRR) are Cytoplasmic-facing. The chain crosses the membrane as a helical span at residues 306 to 326 (ILLLAGCIVMTIAITGIGIVS). Residues 327–415 (FTVKMDSHRD…ASPELPSNYT (89 aa)) lie on the Extracellular side of the membrane. Residues Asn344, Asn351, Asn400, and Asn413 are each glycosylated (N-linked (GlcNAc...) asparagine). Residues 416-436 (ILNWITLLSMMAFVSAFSIGF) form a helical membrane-spanning segment. At 437–464 (GPMTWIVLSEIYPADIRGRAFAFCNSFN) the chain is on the cytoplasmic side. Residue Trp441 participates in D-glucose binding. A helical transmembrane segment spans residues 465 to 483 (WAANLLITLTFLDVIASIG). The Extracellular portion of the chain corresponds to 484 to 485 (LS). A helical transmembrane segment spans residues 486 to 506 (WTFLLYGVVGLLAIAFIYFFI). The Cytoplasmic segment spans residues 507-555 (PETKGQSLEEIDKQFSTKRILQKRETSKGVGKRPSSGPPYQRIGKASPS). The disordered stretch occupies residues 528 to 555 (QKRETSKGVGKRPSSGPPYQRIGKASPS).

Belongs to the major facilitator superfamily. Sugar transporter (TC 2.A.1.1) family. Glucose transporter subfamily.

Its subcellular location is the endomembrane system. It is found in the cytoplasm. The protein resides in the perinuclear region. It catalyses the reaction D-glucose(out) = D-glucose(in). Functionally, facilitative glucose transporter required for the development of the cardiovascular system. The sequence is that of Solute carrier family 2, facilitated glucose transporter member 10 from Xenopus tropicalis (Western clawed frog).